An 802-amino-acid chain; its full sequence is Spondin-1 (802 aa).

A signal peptide spans 1–23 (MAARLRPLALRLLARTFPLVARG). One can recognise a Reelin domain in the interval 24 to 189 (FSDETLEKAA…DSASEGVTDK (166 aa)). 17 cysteine pairs are disulfide-bonded: cysteine 39-cysteine 123, cysteine 151-cysteine 177, cysteine 194-cysteine 331, cysteine 195-cysteine 335, cysteine 197-cysteine 410, cysteine 438-cysteine 475, cysteine 449-cysteine 484, cysteine 454-cysteine 489, cysteine 497-cysteine 533, cysteine 508-cysteine 512, cysteine 543-cysteine 549, cysteine 554-cysteine 590, cysteine 565-cysteine 569, cysteine 600-cysteine 605, cysteine 610-cysteine 645, cysteine 621-cysteine 625, and cysteine 655-cysteine 660. The 194-residue stretch at 190 to 383 (PTLDCCACGT…LTSLDHPQSP (194 aa)) folds into the Spondin domain. Asparagine 209 is a glycosylation site (N-linked (GlcNAc...) asparagine). Ca(2+) contacts are provided by aspartate 320, aspartate 349, and aspartate 353. 6 TSP type-1 domains span residues 437 to 490 (TCIY…PGCS), 496 to 550 (TCMM…EECS), 553 to 606 (SCLV…PECH), 609 to 661 (PCLL…PECP), 663 to 716 (DCEL…RKCL), and 749 to 801 (VCRL…NVHP). Asparagine 676 carries an N-linked (GlcNAc...) asparagine glycan.

It localises to the secreted. It is found in the extracellular space. The protein localises to the extracellular matrix. Its function is as follows. Cell adhesion protein that promotes the attachment of spinal cord and sensory neuron cells and the outgrowth of neurites in vitro. May contribute to the growth and guidance of axons in both the spinal cord and the PNS. Somite-derived spondin 1 is an inhibitory signal involved in patterning the segmental migration of neural crest cells and their topographical segregation within the rostral somites in vitro. May be required to prevent the lateral drifting of the commissural axons after having crossed the floor plate. This Gallus gallus (Chicken) protein is Spondin-1 (SPON1).